Reading from the N-terminus, the 1174-residue chain is Creatine kinase, flagellar (1174 aa).

The segment covering 1 to 14 has biased composition (polar residues); that stretch reads MGCAASSQQTTATG. Residues 1–62 are disordered; the sequence is MGCAASSQQT…PFVEPDPNYP (62 aa). Over residues 18–39 the composition is skewed to low complexity; it reads AAGEKANPAPANNNPNAANKAE. The region spanning 53–139 is the Phosphagen kinase N-terminal 1 domain; sequence PFVEPDPNYP…FDPTIDKRHN (87 aa). The 1; approximate repeat unit spans residues 61-414; it reads YPDLSKHNNY…EKALEKGSDI (354 aa). Positions 166-408 constitute a Phosphagen kinase C-terminal 1 domain; the sequence is YVLSCRVRTG…KKLIELEKAL (243 aa). ATP contacts are provided by residues 169–173, H232, R277, and 333–337; these read SCRVR and RAGVH. Positions 426–512 constitute a Phosphagen kinase N-terminal 2 domain; that stretch reads RAEQVKEGYP…FDPVIDARHG (87 aa). One copy of the 2; approximate repeat lies at 434–787; the sequence is YPDLSKHNNH…EKKLEKGEDI (354 aa). A Phosphagen kinase C-terminal 2 domain is found at 539–781; the sequence is YVLSCRVRTG…ELLVQMEKKL (243 aa). ATP contacts are provided by residues 542–546, H605, R706, 734–739, and D749; these read SCRVR and RGTGGV. The region spanning 800–886 is the Phosphagen kinase N-terminal 3 domain; sequence PIKPFSYDYP…FDPVISARHG (87 aa). One copy of the 3; approximate repeat lies at 808 to 1161; the sequence is YPDFSLHNNW…EKALMKGEDI (354 aa). Residues 913 to 1155 form the Phosphagen kinase C-terminal 3 domain; that stretch reads FVLSCRVRTG…KLLVNLEKAL (243 aa).

It belongs to the ATP:guanido phosphotransferase family. Monomer.

The protein resides in the cytoplasm. Its subcellular location is the cytoskeleton. It is found in the flagellum axoneme. The enzyme catalyses creatine + ATP = N-phosphocreatine + ADP + H(+). In terms of biological role, this axonemal protein participates in an energy shuttle that utilizes phosphocreatine to transfer the energy from ATP generated by the mitochondrion in the sperm head to dynein in the distal portions of the flagellum. The polypeptide is Creatine kinase, flagellar (Strongylocentrotus purpuratus (Purple sea urchin)).